The primary structure comprises 173 residues: T-cell surface glycoprotein CD3 delta chain (173 aa).

An N-terminal signal peptide occupies residues 1–21 (MEHSGILASLILIAVLPQGSP). The Extracellular segment spans residues 22-105 (FKIQVTEYED…CVELDSGTMA (84 aa)). A disulfide bridge connects residues C37 and C73. N-linked (GlcNAc...) asparagine glycosylation is found at N38, N55, and N74. A helical transmembrane segment spans residues 106–126 (GVIFIDLIATLLLALGVYCFA). The Cytoplasmic portion of the chain corresponds to 127–173 (GHETGRPSGAAEVQALLKNEQLYQPLRDREDTQYSRLGGNWPRNKKS). The ITAM domain maps to 138 to 166 (EVQALLKNEQLYQPLRDREDTQYSRLGGN). Residues Y149 and Y160 each carry the phosphotyrosine modification.

As to quaternary structure, the TCR-CD3 complex is composed of a CD3D/CD3E and a CD3G/CD3E heterodimers that preferentially associate with TCRalpha and TCRbeta, respectively, to form TCRalpha/CD3E/CD3G and TCRbeta/CD3G/CD3E trimers. In turn, the hexamer interacts with CD3Z homodimer to form the TCR-CD3 complex. Alternatively, TCRalpha and TCRbeta can be replaced by TCRgamma and TCRdelta. Interacts with coreceptors CD4 and CD8. Phosphorylated on Tyr residues after T-cell receptor triggering by LCK in association with CD4/CD8.

The protein localises to the membrane. Part of the TCR-CD3 complex present on T-lymphocyte cell surface that plays an essential role in adaptive immune response. When antigen presenting cells (APCs) activate T-cell receptor (TCR), TCR-mediated signals are transmitted across the cell membrane by the CD3 chains CD3D, CD3E, CD3G and CD3Z. All CD3 chains contain immunoreceptor tyrosine-based activation motifs (ITAMs) in their cytoplasmic domain. Upon TCR engagement, these motifs become phosphorylated by Src family protein tyrosine kinases LCK and FYN, resulting in the activation of downstream signaling pathways. In addition of this role of signal transduction in T-cell activation, CD3D plays an essential role in thymocyte differentiation. Indeed, participates in correct intracellular TCR-CD3 complex assembly and surface expression. In absence of a functional TCR-CD3 complex, thymocytes are unable to differentiate properly. Interacts with CD4 and CD8 and thus serves to establish a functional link between the TCR and coreceptors CD4 and CD8, which is needed for activation and positive selection of CD4 or CD8 T-cells. The protein is T-cell surface glycoprotein CD3 delta chain (Cd3d) of Mus musculus (Mouse).